Reading from the N-terminus, the 180-residue chain is ATP-dependent protease subunit HslV (180 aa).

Thr10 is a catalytic residue. Gly165, Cys168, and Thr171 together coordinate Na(+).

It belongs to the peptidase T1B family. HslV subfamily. In terms of assembly, a double ring-shaped homohexamer of HslV is capped on each side by a ring-shaped HslU homohexamer. The assembly of the HslU/HslV complex is dependent on binding of ATP.

It is found in the cytoplasm. It catalyses the reaction ATP-dependent cleavage of peptide bonds with broad specificity.. Its activity is regulated as follows. Allosterically activated by HslU binding. Protease subunit of a proteasome-like degradation complex believed to be a general protein degrading machinery. This is ATP-dependent protease subunit HslV from Koribacter versatilis (strain Ellin345).